We begin with the raw amino-acid sequence, 87 residues long: Small ribosomal subunit protein bS16 (87 aa).

This sequence belongs to the bacterial ribosomal protein bS16 family.

This Ehrlichia ruminantium (strain Welgevonden) protein is Small ribosomal subunit protein bS16.